The sequence spans 300 residues: Ribosomal protein bS6--L-glutamate ligase (300 aa).

The ATP-grasp domain maps to 104-287; sequence MQLLARQGID…IAGKMIRWIE (184 aa). ATP is bound by residues Lys-141, 178-179, Asp-187, and 211-213; these read EY and RSN. Asp-248, Glu-260, and Asn-262 together coordinate Mg(2+). Mn(2+) is bound by residues Asp-248, Glu-260, and Asn-262.

It belongs to the RimK family. The cofactor is Mg(2+). Requires Mn(2+) as cofactor.

In terms of biological role, an L-glutamate ligase that catalyzes the ATP-dependent post-translational addition of glutamate residues to the C-terminus of ribosomal protein bS6 (RpsF). Is also able to catalyze the synthesis of poly-alpha-glutamate in vitro, via ATP hydrolysis from unprotected glutamate as substrate. The number of glutamate residues added to either RpsF or to poly-alpha-glutamate changes with pH. The chain is Ribosomal protein bS6--L-glutamate ligase from Escherichia coli O7:K1 (strain IAI39 / ExPEC).